Consider the following 326-residue polypeptide: Phospho-N-acetylmuramoyl-pentapeptide-transferase (326 aa).

Transmembrane regions (helical) follow at residues 3–23, 51–71, 79–99, 115–135, 138–158, 169–189, 195–215, 221–243, and 306–326; these read ISISAGIVTFLLTLVGIPAFI, TMGGLVFLIASVLVAFFFALF, VGMILFILVLYGLIGFLDDFL, LALQLLGGVIFYLFYERGGDI, VFGYPVHLGFFYIFFALFWLV, GVDGLASISVVISLSAYGVIA, MDILLVILAMIGGLLGFFIFN, VFMGDVGSLALGGMLAAISMALH, and FFFWGVGLLASLLTLAILYLM.

The protein belongs to the glycosyltransferase 4 family. MraY subfamily. Mg(2+) serves as cofactor.

It is found in the cell membrane. It catalyses the reaction UDP-N-acetyl-alpha-D-muramoyl-L-alanyl-gamma-D-glutamyl-L-lysyl-D-alanyl-D-alanine + di-trans,octa-cis-undecaprenyl phosphate = Mur2Ac(oyl-L-Ala-gamma-D-Glu-L-Lys-D-Ala-D-Ala)-di-trans,octa-cis-undecaprenyl diphosphate + UMP. It functions in the pathway cell wall biogenesis; peptidoglycan biosynthesis. Its function is as follows. Catalyzes the initial step of the lipid cycle reactions in the biosynthesis of the cell wall peptidoglycan: transfers peptidoglycan precursor phospho-MurNAc-pentapeptide from UDP-MurNAc-pentapeptide onto the lipid carrier undecaprenyl phosphate, yielding undecaprenyl-pyrophosphoryl-MurNAc-pentapeptide, known as lipid I. This is Phospho-N-acetylmuramoyl-pentapeptide-transferase from Streptococcus pneumoniae serotype 19F (strain G54).